We begin with the raw amino-acid sequence, 493 residues long: Cysteine--tRNA ligase (493 aa).

Cysteine 29 is a binding site for Zn(2+). The 'HIGH' region motif lies at 31–41 (VTVYDLSHIGH). Residues cysteine 209, histidine 234, and glutamate 238 each contribute to the Zn(2+) site. The short motif at 266–270 (KMSKS) is the 'KMSKS' region element. Residue lysine 269 coordinates ATP.

The protein belongs to the class-I aminoacyl-tRNA synthetase family. As to quaternary structure, monomer. Zn(2+) serves as cofactor.

The protein localises to the cytoplasm. It catalyses the reaction tRNA(Cys) + L-cysteine + ATP = L-cysteinyl-tRNA(Cys) + AMP + diphosphate. This is Cysteine--tRNA ligase from Syntrophobacter fumaroxidans (strain DSM 10017 / MPOB).